Reading from the N-terminus, the 440-residue chain is Tetratricopeptide repeat protein 5 (440 aa).

TPR repeat units follow at residues Glu-7–Val-61, Ala-68–Leu-98, Val-103–Leu-130, Lys-136–Met-174, and Gly-179–Val-216. The Nuclear export signal motif lies at Leu-13–Tyr-24. Ser-203 is modified (phosphoserine; by ATM). Residue Ser-221 is modified to Phosphoserine; by CHEK2. The TPR 6 repeat unit spans residues Pro-224–Leu-253. The segment at Lys-285–Lys-287 is mediates interaction with 28S rRNA of ribosome-coding tubulin.

In terms of assembly, interacts with JMY and p300/EP300; the interaction occurs in the nucleus and augments the association between JMY and p300/EP300 in response to DNA damage. Forms a complex with HSF1 and p300/EP300; these interactions augment chromatin-bound HSF1 and p300/EP300 histone acetyltransferase activity, resulting in enhanced heat-shock-responsive transcription. Interacts with PRMT5; the interaction is DNA damage-dependent and promotes PRMT5 interaction with p53/TP53 and subsequent methylation. Interacts with JMY; the interaction occurs in the cytoplasm and results in the inhibition of JYM's nucleation activity. Interacts with ribosome-coding tubulin (via 60S subunit 28S rRNA and protein uL24/RPL26) and the N-terminal of nascent tubulin polypeptide (via alpha-tubulin MREC motif and beta-tubulin MREI motif); these interactions result in tubulin mRNA-targeted degradation. Interacts with ATP5F1B; the interaction occurs in the mitochondria and results in ATP production decrease. Interacts with p53/TP53; the interaction occurs in the mitochondria and results in increased apoptosis. Post-translationally, phosphorylation by ATM kinase induces nuclear accumulation while interfering with nuclear export, and phosphorylation by CHEK2 kinase enhances nuclear stability.

The protein localises to the nucleus. Its subcellular location is the cytoplasm. The protein resides in the cytoplasmic vesicle. It is found in the mitochondrion matrix. Its function is as follows. Cofactor involved in the regulation of various cellular mechanisms such as actin regulation, autophagy, chromatin regulation and DNA repair. In non-stress conditions, interacts with cofactor JMY in the cytoplasm which prevents JMY's actin nucleation activity and ability to activate the Arp2/3 complex. Acts as a negative regulator of nutrient stress-induced autophagy by preventing JMY's interaction with MAP1LC3B, thereby preventing autophagosome formation. Involves in tubulin autoregulation by promoting its degradation in response to excess soluble tubulin. To do so, associates with the active ribosome near the ribosome exit tunnel and with nascent tubulin polypeptides early during their translation, triggering tubulin mRNA-targeted degradation. Following DNA damage, phosphorylated by DNA damage responsive protein kinases ATM and CHEK2, leading to its nuclear accumulation and stability. Nuclear TTC5/STRAP promotes the assembly of a stress-responsive p53/TP53 coactivator complex, which includes the coactivators JMY and p300, thereby increasing p53/TP53-dependent transcription and apoptosis. Also recruits arginine methyltransferase PRMT5 to p53/TP53 when DNA is damaged, allowing PRMT5 to methylate p53/TP53. In DNA stress conditions, also prevents p53/TP53 degradation by E3 ubiquitin ligase MDM2. Upon heat-shock stress, forms a chromatin-associated complex with heat-shock factor 1 HSF1 and p300/EP300 to stimulate heat-shock-responsive transcription, thereby increasing cell survival. Mitochondrial TTC5/STRAP interacts with ATP synthase subunit beta ATP5F1B which decreased ATP synthase activity and lowers mitochondrial ATP production, thereby regulating cellular respiration and mitochondrial-dependent apoptosis. Mitochondrial TTC5/STRAP also regulates p53/TP53-mediated apoptosis. This Homo sapiens (Human) protein is Tetratricopeptide repeat protein 5.